A 1979-amino-acid chain; its full sequence is Myosin-11 (1979 aa).

At serine 2 the chain carries Blocked amino end (Ser). In terms of domain architecture, Myosin N-terminal SH3-like spans 30 to 80 (SAKKLVWVPSEKHGFEAASIKEEKGDEVTVELQENGKKVTLSKDDIQKMNP). The region spanning 84 to 789 (SKVEDMAELT…VLAHLEEERD (706 aa)) is the Myosin motor domain. Lysine 128 is subject to N6,N6,N6-trimethyllysine. Residue 177–184 (GESGAGKT) participates in ATP binding. 2 actin-binding regions span residues 667 to 689 (LTKLMTTLRNTNPNFVRCIIPNH) and 768 to 782 (RIGQSKIFFRTGVLA). An IQ domain is found at 792–821 (ITDVIIAFQAQCRGYLARKAFAKRQQQLTA). The interval 850 to 1979 (LLQVTRQEEE…DGDFNGKASE (1130 aa)) is rodlike tail (S2 and LMM domains). Residues 850–1979 (LLQVTRQEEE…DGDFNGKASE (1130 aa)) adopt a coiled-coil conformation. Disordered stretches follow at residues 1130-1150 (QEDLESEKAARNKAEKQKRDL), 1709-1736 (RKQADLEKEEMAEELASANSGRTSLQDE), and 1891-1979 (QLEE…KASE). A compositionally biased stretch (basic and acidic residues) spans 1135-1150 (SEKAARNKAEKQKRDL). Residues 1968–1979 (GRDGDFNGKASE) show a composition bias toward basic and acidic residues.

Belongs to the TRAFAC class myosin-kinesin ATPase superfamily. Myosin family. Muscle myosin is a hexameric protein that consists of 2 heavy chain subunits (MHC), 2 alkali light chain subunits (MLC) and 2 regulatory light chain subunits (MLC-2).

Its subcellular location is the cytoplasm. It localises to the myofibril. Muscle contraction. This Gallus gallus (Chicken) protein is Myosin-11 (MYH11).